A 348-amino-acid polypeptide reads, in one-letter code: WD repeat-containing protein JIP5 (348 aa).

WD repeat units follow at residues Lys5–Ser44, Pro51–Glu90, Ala94–Thr132, Gln135–Leu174, Asp179–Val218, Gly223–Val261, and Thr264–Asp304. Positions Leu299 to Glu318 are enriched in acidic residues. A disordered region spans residues Leu299–Leu348.

Belongs to the WD repeat WDR55 family.

The protein localises to the nucleus. The protein resides in the nucleolus. This chain is WD repeat-containing protein JIP5 (JIP5), found in Cryptococcus neoformans var. neoformans serotype D (strain JEC21 / ATCC MYA-565) (Filobasidiella neoformans).